Reading from the N-terminus, the 1044-residue chain is Sarcoplasmic/endoplasmic reticulum calcium ATPase 2 (1044 aa).

At 1-48 the chain is on the cytoplasmic side; the sequence is MENAHTKTVEEVLGHFGVNESTGLSLEQVKKLKERWGSNELPAEEGKT. Position 38 is a phosphoserine (serine 38). A helical membrane pass occupies residues 49 to 69; the sequence is LLELVIEQFEDLLVRILLLAA. Topologically, residues 70–89 are lumenal; sequence CISFVLAWFEEGEETITAFV. A helical transmembrane segment spans residues 90 to 110; that stretch reads EPFVILLILVANAIVGVWQER. Topologically, residues 111–253 are cytoplasmic; it reads NAENAIEALK…QERTPLQQKL (143 aa). The chain crosses the membrane as a helical span at residues 254–273; the sequence is DEFGEQLSKVISLICIAVWI. The Lumenal portion of the chain corresponds to 274 to 295; it reads INIGHFNDPVHGGSWIRGAIYY. Residues tyrosine 294 and tyrosine 295 each carry the 3'-nitrotyrosine modification. The helical transmembrane segment at 296–313 threads the bilayer; sequence FKIAVALAVAAIPEGLPA. Positions 304, 305, 307, and 309 each coordinate Ca(2+). Residues 314–756 lie on the Cytoplasmic side of the membrane; that stretch reads VITTCLALGT…EEGRAIYNNM (443 aa). Catalysis depends on aspartate 351, which acts as the 4-aspartylphosphate intermediate. Aspartate 351 and threonine 353 together coordinate Mg(2+). Residue threonine 353 coordinates ATP. Phosphothreonine is present on threonine 441. Residues glutamate 442, arginine 489, and lysine 514 each coordinate ATP. A Phosphoserine modification is found at serine 531. Arginine 559 is a binding site for ATP. Positions 575-594 are interaction with HAX1; sequence MHLEDSANFIKYETNLTFVG. At serine 580 the chain carries Phosphoserine. Residues threonine 624, glycine 625, and aspartate 626 each contribute to the ATP site. 2 positions are modified to phosphoserine: serine 661 and serine 663. The ATP site is built by arginine 677 and lysine 683. Aspartate 702 contacts Mg(2+). Asparagine 705 contributes to the ATP binding site. A helical transmembrane segment spans residues 757–776; that stretch reads KQFIRYLISSNVGEVVCIFL. 2 residues coordinate Ca(2+): asparagine 767 and glutamate 770. Topologically, residues 777 to 786 are lumenal; sequence TAALGFPEAL. A helical membrane pass occupies residues 787-807; the sequence is IPVQLLWVNLVTDGLPATALG. The segment at 787–807 is interaction with PLN; sequence IPVQLLWVNLVTDGLPATALG. An interaction with TMEM64 and PDIA3 region spans residues 788-1044; the sequence is PVQLLWVNLV…DTNFSDMFWS (257 aa). Ca(2+) contacts are provided by asparagine 795, threonine 798, and aspartate 799. Topologically, residues 808 to 827 are cytoplasmic; it reads FNPPDLDIMNKPPRNPKEPL. Residues 828-850 traverse the membrane as a helical segment; the sequence is ISGWLFFRYLAIGCYVGAATVGA. Residues 851–896 are Lumenal-facing; sequence AAWWFIAADGGPRVSFYQLSHFLQCKEDNPDFDGVDCAIFESPYPM. Cysteine 875 and cysteine 887 are joined by a disulfide. Residues 897–916 form a helical membrane-spanning segment; it reads TMALSVLVTIEMCNALNSLS. Glutamate 907 is a binding site for Ca(2+). Residues 917-929 are Cytoplasmic-facing; that stretch reads ENQSLLRMPPWEN. A helical transmembrane segment spans residues 930–948; it reads IWLVGSICLSMSLHFLILY. The segment at 931-942 is interaction with PLN; the sequence is WLVGSICLSMSL. Topologically, residues 949–963 are lumenal; the sequence is VEPLPLIFQITPLNL. A helical membrane pass occupies residues 964–984; that stretch reads TQWLMVLKISLPVILMDETLK. The Cytoplasmic portion of the chain corresponds to 985–1044; sequence FVARNYLEQPGKECVQPATKSSCSLSACTDGISWPFVLLIMPLVVWVYSTDTNFSDMFWS.

It belongs to the cation transport ATPase (P-type) (TC 3.A.3) family. Type IIA subfamily. Interacts with sarcolipin (SLN); the interaction inhibits ATP2A2 Ca(2+) affinity. Interacts with phospholamban (PLN); the interaction inhibits ATP2A2 Ca(2+) affinity. Interacts with myoregulin (MRLN). Interacts with ARLN and ERLN; the interactions inhibit ATP2A2 Ca(2+) affinity. Interacts with STRIT1/DWORF; the interaction results in activation of ATP2A2. Interacts with the monomeric forms of SLN, PLN, ARLN, ERLN and STRI1/DWORF. Interacts with HAX1. Interacts with S100A8 and S100A9. Interacts with SLC35G1 and STIM1. Interacts with TMEM203. Interacts with TMEM64 and PDIA3. Interacts with TMX1. Interacts with TMX2. Interacts with VMP1; VMP1 competes with PLN and SLN to prevent them from forming an inhibitory complex with ATP2A2. Interacts with ULK1. Interacts with S100A1 in a Ca(2+)-dependent manner. Interacts with TUNAR. Interacts with FLVCR2; this interaction occurs in the absence of heme and promotes ATP2A2 proteasomal degradation; this complex is dissociated upon heme binding. Interacts with FNIP1. As to quaternary structure, interacts with TRAM2 (via C-terminus). Mg(2+) is required as a cofactor. In terms of processing, nitrated under oxidative stress. Nitration on the two tyrosine residues inhibits catalytic activity. Post-translationally, serotonylated on Gln residues by TGM2 in response to hypoxia, leading to its inactivation. Isoform 2 is highly expressed in heart and slow twitch skeletal muscle. Isoform 2 is widely expressed.

Its subcellular location is the endoplasmic reticulum membrane. The protein localises to the sarcoplasmic reticulum membrane. It carries out the reaction Ca(2+)(in) + ATP + H2O = Ca(2+)(out) + ADP + phosphate + H(+). With respect to regulation, has different conformational states with differential Ca2+ affinity. The E1 conformational state (active form) shows high Ca(2+) affinity, while the E2 state exhibits low Ca(2+) affinity. Binding of ATP allosterically increases its affinity for subsequent binding of Ca2+. Reversibly inhibited by phospholamban (PLN) at low calcium concentrations. PLN inhibits ATP2A2 Ca(2+) affinity by disrupting its allosteric activation by ATP. Inhibited by sarcolipin (SLN) and myoregulin (MRLN). The inhibition is blocked by VMP1. Enhanced by STRIT1/DWORF; STRIT1 increases activity by displacing sarcolipin (SLN), phospholamban (PLN) and myoregulin (MRLN). Stabilizes SERCA2 in its E2 state. Its function is as follows. This magnesium-dependent enzyme catalyzes the hydrolysis of ATP coupled with the translocation of calcium from the cytosol to the sarcoplasmic reticulum lumen. Involved in autophagy in response to starvation. Upon interaction with VMP1 and activation, controls ER-isolation membrane contacts for autophagosome formation. Also modulates ER contacts with lipid droplets, mitochondria and endosomes. In coordination with FLVCR2 mediates heme-stimulated switching from mitochondrial ATP synthesis to thermogenesis. In terms of biological role, involved in the regulation of the contraction/relaxation cycle. Acts as a regulator of TNFSF11-mediated Ca(2+) signaling pathways via its interaction with TMEM64 which is critical for the TNFSF11-induced CREB1 activation and mitochondrial ROS generation necessary for proper osteoclast generation. Association between TMEM64 and SERCA2 in the ER leads to cytosolic Ca(2+) spiking for activation of NFATC1 and production of mitochondrial ROS, thereby triggering Ca(2+) signaling cascades that promote osteoclast differentiation and activation. This Mus musculus (Mouse) protein is Sarcoplasmic/endoplasmic reticulum calcium ATPase 2.